The following is a 402-amino-acid chain: FMN-dependent alpha-hydroxy acid dehydrogenase qulF (402 aa).

An FMN hydroxy acid dehydrogenase domain is found at 22 to 394; that stretch reads RLPAITTNPT…NRDCMRRISY (373 aa). Residue Tyr48 coordinates a 2-oxocarboxylate. FMN-binding residues include Ser130 and Gln152. A 2-oxocarboxylate contacts are provided by Tyr154 and Arg189. Lys265 contributes to the FMN binding site. His289 (proton acceptor) is an active-site residue. Position 292 (Arg292) interacts with a 2-oxocarboxylate. FMN contacts are provided by residues 320 to 324 and 343 to 344; these read DSGVR and GR.

The protein belongs to the FMN-dependent alpha-hydroxy acid dehydrogenase family. Requires FMN as cofactor.

In terms of biological role, FMN-dependent alpha-hydroxy acid dehydrogenase; part of the gene cluster that mediates the biosynthesis of quinolactacin A2 (QUL A2), a fungal alkaloid that features a quinolone-gamma-lactam hybrid, which is a potential pharmacophore for the treatment of cancer and Alzheimer's disease. The quinolone-gamma-lactam hybrid scaffold is synthesized from the combination of L-isoleucine (L-Ile) and the nonproteinogenic amino acid L-kynurenine, followed by quinolone cyclization, oxidative decarboxylation, and lactam formation. Additionally, the N-methyl group is derived from methionine, which might be catalyzed by an S-adenosylmethionine (SAM)-dependent methyltransferase. Bioconversion of L-tryptophan to L-kynurenine could be catalyzed by the indoleamine-2,3-dioxygenase (IDO) qulI to produce an unstable product, N-formyl-L-kynurenine, followed by kynurenine formamidase catalyzed hydrolysis. QulM then acts as a methyltransferase that methylates L-kynurenine at the N-4 position. The FMN-dependent alpha-hydroxy acid dehydrogenase qulF than functions as an oxidative decarboxylase which converts N-methylkynurenine into 2-aminobenzoylacetamide via 2 tandem reactions, including dehydrogenation and decarboxylation. An amidase located outside of the qul gene cluster further produces the unstable beta-keto acid precursor N-methyl-2-aminobenzoylacetate, which could be spontaneously dehydrated to form N-methyl-4-hydroxy-2-quinolone. The NRPS qulB is able to incorporate N-methyl-2-aminobenzoylacetate and efficiently compete with the spontaneous reaction. By further extending the beta-keto acid with L-Ile, qulA performs a Dieckmann condensation to form the gamma-lactam ring and release a 4-ketopyrrolidinone intermediate from the assembly line. This intermediate could plausibly further undergo a spontaneous cyclization to yield the final quinolone-gamma-lactam hybrid structure. This Penicillium citrinum protein is FMN-dependent alpha-hydroxy acid dehydrogenase qulF.